We begin with the raw amino-acid sequence, 439 residues long: Probable guanine deaminase (439 aa).

His76 and His78 together coordinate Zn(2+). Residues 78–81 (HYPQ), 203–204 (RF), 231–234 (HINE), and Asp321 each bind substrate. Residues His231 and Asp321 each coordinate Zn(2+).

Belongs to the metallo-dependent hydrolases superfamily. ATZ/TRZ family. Requires Zn(2+) as cofactor.

It carries out the reaction guanine + H2O + H(+) = xanthine + NH4(+). Its pathway is purine metabolism; guanine degradation; xanthine from guanine: step 1/1. Functionally, catalyzes the hydrolytic deamination of guanine, producing xanthine and ammonia. The chain is Probable guanine deaminase (guaD) from Deinococcus radiodurans (strain ATCC 13939 / DSM 20539 / JCM 16871 / CCUG 27074 / LMG 4051 / NBRC 15346 / NCIMB 9279 / VKM B-1422 / R1).